We begin with the raw amino-acid sequence, 138 residues long: Transcription antitermination protein NusB (138 aa).

The protein belongs to the NusB family.

Functionally, involved in transcription antitermination. Required for transcription of ribosomal RNA (rRNA) genes. Binds specifically to the boxA antiterminator sequence of the ribosomal RNA (rrn) operons. The polypeptide is Transcription antitermination protein NusB (Desulforudis audaxviator (strain MP104C)).